The following is a 107-amino-acid chain: Probable monothiol glutaredoxin 2 (107 aa).

The region spanning 7–107 (FKFIENEIKN…LEKMLKAYTR (101 aa)) is the Glutaredoxin domain. Residue Lys24 coordinates glutathione. Cys32 is a binding site for [2Fe-2S] cluster. Residues Arg61, Phe73, and 86–87 (CD) contribute to the glutathione site.

Belongs to the glutaredoxin family. Monothiol subfamily.

This is Probable monothiol glutaredoxin 2 (grxC2) from Rickettsia conorii (strain ATCC VR-613 / Malish 7).